Reading from the N-terminus, the 508-residue chain is Anthranilate synthase component 1 (508 aa).

Residues Ser49 and 282–284 each bind L-tryptophan; that span reads PYM. Residue 317 to 318 participates in chorismate binding; the sequence is GT. Mg(2+) is bound at residue Glu344. Chorismate-binding positions include Tyr432, Arg452, 466–468, and Gly468; that span reads GAG. Mg(2+) is bound at residue Glu481.

This sequence belongs to the anthranilate synthase component I family. Heterotetramer consisting of two non-identical subunits: a beta subunit (TrpG) and a large alpha subunit (TrpE). Requires Mg(2+) as cofactor.

The enzyme catalyses chorismate + L-glutamine = anthranilate + pyruvate + L-glutamate + H(+). Its pathway is amino-acid biosynthesis; L-tryptophan biosynthesis; L-tryptophan from chorismate: step 1/5. With respect to regulation, feedback inhibited by tryptophan. Its function is as follows. Part of a heterotetrameric complex that catalyzes the two-step biosynthesis of anthranilate, an intermediate in the biosynthesis of L-tryptophan. In the first step, the glutamine-binding beta subunit (TrpG) of anthranilate synthase (AS) provides the glutamine amidotransferase activity which generates ammonia as a substrate that, along with chorismate, is used in the second step, catalyzed by the large alpha subunit of AS (TrpE) to produce anthranilate. In the absence of TrpG, TrpE can synthesize anthranilate directly from chorismate and high concentrations of ammonia. The sequence is that of Anthranilate synthase component 1 (trpE) from Geobacillus stearothermophilus (Bacillus stearothermophilus).